A 518-amino-acid polypeptide reads, in one-letter code: Glutamate--cysteine ligase (518 aa).

The protein belongs to the glutamate--cysteine ligase type 1 family. Type 1 subfamily.

The enzyme catalyses L-cysteine + L-glutamate + ATP = gamma-L-glutamyl-L-cysteine + ADP + phosphate + H(+). The protein operates within sulfur metabolism; glutathione biosynthesis; glutathione from L-cysteine and L-glutamate: step 1/2. The protein is Glutamate--cysteine ligase of Shigella flexneri serotype 5b (strain 8401).